Here is a 152-residue protein sequence, read N- to C-terminus: UPF0178 protein YaiI (152 aa).

The protein belongs to the UPF0178 family.

The sequence is that of UPF0178 protein YaiI from Escherichia coli O6:K15:H31 (strain 536 / UPEC).